Here is a 22-residue protein sequence, read N- to C-terminus: GLLGGLLGPLLGGGGGGGGGLL.

Residues 1 to 22 (GLLGGLLGPLLGGGGGGGGGLL) form a disordered region.

As to expression, expressed by the skin glands.

Its subcellular location is the secreted. In terms of biological role, antimicrobial protein. Has antibacterial activity against the Gram-negative bacteria E.coli ATCC 28922 (MIC=50 uM), P.aeruginosa ATCC 9027 (MIC=8 uM) and C.freundii ATCC 8090 (MIC=75 uM). Does not have hemolytic activity. The chain is Leptoglycin from Leptodactylus pentadactylus (Smokey jungle frog).